We begin with the raw amino-acid sequence, 559 residues long: Protein QNR-71 (559 aa).

A signal peptide spans 1–22; that stretch reads MSQAHRHLALLLPAEAVLCAAA. The Extracellular segment spans residues 23–487; it reads MRFQDVLSNG…NGGSSSGTTK (465 aa). 10 N-linked (GlcNAc...) asparagine glycosylation sites follow: Asn92, Asn133, Asn145, Asn149, Asn192, Asn199, Asn248, Asn274, Asn307, and Asn311. The PKD domain maps to 239-326; that stretch reads VSMSQKHDRN…IIPVPCKPVT (88 aa). The interval 329–356 is disordered; sequence PSLPTPAVTTDASSNSDPSAPNEMAEDN. The span at 335 to 347 shows a compositional bias: polar residues; it reads AVTTDASSNSDPS. Residue Asn459 is glycosylated (N-linked (GlcNAc...) asparagine). A helical transmembrane segment spans residues 488–508; it reads GVFIFLGLLAVFGAIGAFVLY. At 509–559 the chain is on the cytoplasmic side; the sequence is KRYKQYKPIERSAGQAENQEGLSAYVSNFKAFFFPKSTERNPLLKSKPGIV.

This sequence belongs to the PMEL/NMB family. As to expression, melanocyte-specific, restricted to the pigmented layer of the retina and the epidermis.

The protein resides in the membrane. Its function is as follows. Could be involved in melanogenesis. This Coturnix japonica (Japanese quail) protein is Protein QNR-71 (QNR-71).